The sequence spans 241 residues: 2,3,4,5-tetrahydropyridine-2,6-dicarboxylate N-acetyltransferase (241 aa).

It belongs to the transferase hexapeptide repeat family. DapH subfamily.

It catalyses the reaction (S)-2,3,4,5-tetrahydrodipicolinate + acetyl-CoA + H2O = L-2-acetamido-6-oxoheptanedioate + CoA. The protein operates within amino-acid biosynthesis; L-lysine biosynthesis via DAP pathway; LL-2,6-diaminopimelate from (S)-tetrahydrodipicolinate (acetylase route): step 1/3. Catalyzes the transfer of an acetyl group from acetyl-CoA to tetrahydrodipicolinate. In Thermoanaerobacter sp. (strain X514), this protein is 2,3,4,5-tetrahydropyridine-2,6-dicarboxylate N-acetyltransferase.